Consider the following 118-residue polypeptide: MLRVVAKAQYPAAVRCFSTSHAAFAKVSFESSEDFLKKIGRDTVKLAEKFETWDELKNSTSSDLKEKGIEARDRRYIMTQLYRYKNGEKIREIPRGKKTWGGERKRNLVQALFKAGQN.

Residues 1–24 (MLRVVAKAQYPAAVRCFSTSHAAF) constitute a mitochondrion transit peptide.

This sequence belongs to the mitochondrion-specific ribosomal protein mS41 family.

The protein resides in the mitochondrion. Involved in telomere length regulation. This is Small ribosomal subunit protein mS41 (FYV4) from Yarrowia lipolytica (strain CLIB 122 / E 150) (Yeast).